The following is a 242-amino-acid chain: Ribonuclease 3 (242 aa).

The 129-residue stretch at 14-142 folds into the RNase III domain; that stretch reads LRRFAARFAL…VIGALYLSTG (129 aa). A Mg(2+)-binding site is contributed by Glu56. The active site involves Asp60. Residues Asp128 and Glu131 each coordinate Mg(2+). Glu131 is a catalytic residue. The DRBM domain maps to 170-235; that stretch reads NHKSALQELT…ARGAYAALRS (66 aa).

It belongs to the ribonuclease III family. In terms of assembly, homodimer. The cofactor is Mg(2+).

Its subcellular location is the cytoplasm. It catalyses the reaction Endonucleolytic cleavage to 5'-phosphomonoester.. Its function is as follows. Digests double-stranded RNA. Involved in the processing of primary rRNA transcript to yield the immediate precursors to the large and small rRNAs (23S and 16S). Processes some mRNAs, and tRNAs when they are encoded in the rRNA operon. Processes pre-crRNA and tracrRNA of type II CRISPR loci if present in the organism. This chain is Ribonuclease 3, found in Gloeobacter violaceus (strain ATCC 29082 / PCC 7421).